The chain runs to 206 residues: LexA repressor (206 aa).

The segment at residues 28 to 48 (RAEIATRLGFKSANAAEEHLK) is a DNA-binding region (H-T-H motif). Catalysis depends on for autocatalytic cleavage activity residues Ser-123 and Lys-160.

Belongs to the peptidase S24 family. As to quaternary structure, homodimer.

The enzyme catalyses Hydrolysis of Ala-|-Gly bond in repressor LexA.. Functionally, represses a number of genes involved in the response to DNA damage (SOS response), including recA and lexA. In the presence of single-stranded DNA, RecA interacts with LexA causing an autocatalytic cleavage which disrupts the DNA-binding part of LexA, leading to derepression of the SOS regulon and eventually DNA repair. The sequence is that of LexA repressor from Shewanella oneidensis (strain ATCC 700550 / JCM 31522 / CIP 106686 / LMG 19005 / NCIMB 14063 / MR-1).